The primary structure comprises 726 residues: PWWP domain-containing protein 2 (726 aa).

Over residues 1-10 (MSTESERIES) the composition is skewed to basic and acidic residues. The interval 1 to 26 (MSTESERIESVSEANASSLEVGNDQM) is disordered. Over residues 12–26 (SEANASSLEVGNDQM) the composition is skewed to polar residues. A PWWP domain is found at 199 to 260 (DSDLVWAKVR…ASRIKPFRQH (62 aa)). The segment at 392–441 (APKISPAEEQSSLVEVSDPEPTKSKQVYTKRRKTNLQTEQSSLVEVSDPD) is disordered. Residues 426–435 (NLQTEQSSLV) are compositionally biased toward polar residues. 2 short sequence motifs (nuclear localization signal) span residues 460–467 (KKKEKTLA) and 495–502 (KKRKVVQS). Disordered stretches follow at residues 472 to 545 (EKRV…PQKA) and 568 to 726 (TRLL…VSAE). Residues 494–512 (EKKRKVVQSKVPKSTKKIK) are compositionally biased toward basic residues. The segment covering 606 to 634 (SPSTTLSSPHAASVTKTTSGKSNSVSLDH) has biased composition (polar residues). A compositionally biased stretch (basic and acidic residues) spans 658–688 (LESRDLKDSSKEQVVHEDKKEAANVADEKSI).

Belongs to the PDP family. Interacts with DEK3. Binds to MSI4/FVE and MSI5. Component of the PRC2 (polycomb repressive complex 2) complex which regulates histone methylation on histone H3K27.

It localises to the nucleus. In terms of biological role, together with PDP1, PDP3 and PDP6, interacts with MSI4/FVE and MSI5 to suppress FLC, MAF4 and MAF5 expression by regulating the function of the PRC2 complex and modulating H3K27me3 level, thereby promoting flowering. The chain is PWWP domain-containing protein 2 from Arabidopsis thaliana (Mouse-ear cress).